The chain runs to 117 residues: Large ribosomal subunit protein bL31B (117 aa).

Residues 75–117 (KRFERKKEASPADTPPESDSTTENASVEKKAEKKRVTAKGSKK) are disordered. The span at 100–109 (SVEKKAEKKR) shows a compositional bias: basic and acidic residues.

It belongs to the bacterial ribosomal protein bL31 family. Type B subfamily. Part of the 50S ribosomal subunit.

This chain is Large ribosomal subunit protein bL31B, found in Protochlamydia amoebophila (strain UWE25).